The following is a 926-amino-acid chain: Taz1-interacting factor 1 (926 aa).

Coiled coils occupy residues 461-496 and 548-671; these read REAV…SHQN and SFTD…LKQK. Residue Ser-548 is modified to Phosphoserine. Residue Thr-550 is modified to Phosphothreonine. Residue Ser-552 is modified to Phosphoserine.

It belongs to the ATG11 family. Homodimer and potential homooligomers. Interacts with taz1.

The protein resides in the preautophagosomal structure membrane. The protein localises to the vacuole membrane. Its function is as follows. Involved in cytoplasm to vacuole transport (Cvt), pexophagy, mitophagy and nucleophagy. Recruits mitochondria for their selective degradation via autophagy (mitophagy) during starvation. Works as scaffold proteins that recruit ATG proteins to the preautophagosome (PAS), the site of vesicle/autophagosome formation. Required for atg9 anterograde transport from the mitochondria to the PAS. Required for nitrogen starvation-induced sexual development and for entering the dormant G0 state. This is Taz1-interacting factor 1 (taf1) from Schizosaccharomyces pombe (strain 972 / ATCC 24843) (Fission yeast).